The primary structure comprises 483 residues: RNA-binding protein Nova-1 (483 aa).

The segment at 1-44 is disordered; the sequence is MMAAAPIQQNGTHTGVPIDLDPPDSRKRPLEAPPEAGSTKRTNT. The short motif at 27-43 is the Bipartite nuclear localization signal element; it reads KRPLEAPPEAGSTKRTN. KH domains follow at residues 49–116, 147–213, and 397–464; these read QYFL…HGFI, IKQV…VELI, and KDVV…QYLI. The tract at residues 395–479 is required for RNA binding; it reads GSKDVVEIAV…YEQGVRAANP (85 aa).

As to quaternary structure, interacts with PTBP2; the interaction is direct.

It localises to the nucleus. Its function is as follows. Functions to regulate alternative splicing in neurons by binding pre-mRNA in a sequence-specific manner to activate exon inclusion or exclusion. It binds specifically to the sequences 5'-YCAY-3' and regulates splicing in only a subset of regulated exons. Binding to an exonic 5'-YCAY-3' cluster changes the protein complexes assembled on pre-mRNA, blocking U1 snRNP binding and exon inclusion, whereas binding to an intronic 5'-YCAY-3' cluster enhances spliceosome assembly and exon inclusion. Binding to 5'-YCAY-3' clusters results in a local and asymmetric action to regulate spliceosome assembly and alternative splicing in neurons. Binding to an exonic 5'-YCAY-3' cluster changed the protein complexes assembled on pre-mRNA, blocking U1 snRNP (small nuclear ribonucleoprotein) binding and exon inclusion, whereas binding to an intronic 5'-YCAY-3' cluster enhanced spliceosome assembly and exon inclusion. With NOVA1, they perform unique biological functions in different brain areas and cell types. Autoregulates its own expression by acting as a splicing repressor. Acts to activate the inclusion of exon E3A in the glycine receptor alpha-2 chain and of exon E9 in gamma-aminobutyric-acid receptor gamma-2 subunit via a distal downstream UCAU-rich intronic splicing enhancer. Acts to regulate a novel glycine receptor alpha-2 chain splice variant (alpha-2N) in developing spinal cord. The sequence is that of RNA-binding protein Nova-1 (NOVA1) from Macaca fascicularis (Crab-eating macaque).